A 260-amino-acid chain; its full sequence is Circadian clock-controlled protein daywake (260 aa).

The first 25 residues, 1-25, serve as a signal peptide directing secretion; sequence MQLTSASVCLLWMGLLSWVSHRIDA.

The protein belongs to the TO family.

Component of the circadian clock or downstream effector of clock function. Required for suppressing daytime sleep (siesta) under ambient environmental temperatures. Part of a heat avoidance mechanism that modulates daytime sleep behavior under different environmental temperatures to minimize the risk of heat exposure. Under cooler ambient temperatures, suppresses daytime sleep (siesta) and thus allows for longer periods of daytime activity. In Drosophila yakuba (Fruit fly), this protein is Circadian clock-controlled protein daywake.